The chain runs to 174 residues: uncharacterized protein (174 aa).

Positions 42–174 (SNTKNINLYE…GVKGMFWYPR (133 aa)) constitute an N-acetyltransferase domain.

This sequence belongs to the acetyltransferase family. Ycf52 subfamily.

Its subcellular location is the plastid. The protein resides in the chloroplast. This is an uncharacterized protein from Porphyra purpurea (Red seaweed).